A 384-amino-acid polypeptide reads, in one-letter code: Brix domain-containing protein F44G4.1 (384 aa).

Disordered regions lie at residues 1–58 (MAPK…KVVK) and 82–135 (SKAT…PQKE). The segment covering 18-48 (FVEEEVTGDVDEDGFEQAEDMPDEVDSDEDE) has biased composition (acidic residues). Basic residues predominate over residues 96-114 (LPKSQRGKALKRALRKDKR). Over residues 115-127 (ARQGERAQIRDEL) the composition is skewed to basic and acidic residues. The region spanning 177–360 (PKVMITMTPK…LKWLQKGTFD (184 aa)) is the Brix domain.

This chain is Brix domain-containing protein F44G4.1, found in Caenorhabditis elegans.